Reading from the N-terminus, the 121-residue chain is Small ribosomal subunit protein uS13 (121 aa).

Residues 98 to 121 (RGQKTRNNAHTVKGKPKSIAGKKK) form a disordered region. Over residues 109 to 121 (VKGKPKSIAGKKK) the composition is skewed to basic residues.

It belongs to the universal ribosomal protein uS13 family. As to quaternary structure, part of the 30S ribosomal subunit. Forms a loose heterodimer with protein S19. Forms two bridges to the 50S subunit in the 70S ribosome.

In terms of biological role, located at the top of the head of the 30S subunit, it contacts several helices of the 16S rRNA. In the 70S ribosome it contacts the 23S rRNA (bridge B1a) and protein L5 of the 50S subunit (bridge B1b), connecting the 2 subunits; these bridges are implicated in subunit movement. Contacts the tRNAs in the A and P-sites. The chain is Small ribosomal subunit protein uS13 from Phytoplasma australiense.